A 1030-amino-acid chain; its full sequence is Arrestin domain-containing protein F (1030 aa).

Disordered stretches follow at residues 1–27 and 119–154; these read MEII…GSKR and ENKN…NNPL. A compositionally biased stretch (acidic residues) spans 128-137; the sequence is NFDDGEEDDT. The segment covering 142-152 has biased composition (low complexity); sequence NINNKNNNNNN. 2 coiled-coil regions span residues 320–374 and 544–577; these read HQLE…HNNN and QKLN…IRDQ. 2 disordered regions span residues 539–572 and 885–931; these read SPQS…NSES and NNEK…NNNN. Over residues 547–562 the composition is skewed to basic and acidic residues; that stretch reads NKKDKEKEKEKEKEND. A compositionally biased stretch (low complexity) spans 910-931; the sequence is SPSSSSFLSNSSNTSSSKNNNN.

Belongs to the arrestin family.

The protein is Arrestin domain-containing protein F (adcF) of Dictyostelium discoideum (Social amoeba).